The chain runs to 986 residues: Regulator of telomere elongation helicase 1 homolog (986 aa).

Residues alanine 7–alanine 326 enclose the Helicase ATP-binding domain. Serine 42–threonine 49 serves as a coordination point for ATP. Residues cysteine 148, cysteine 166, cysteine 175, and cysteine 211 each contribute to the [4Fe-4S] cluster site. The short motif at aspartate 254 to histidine 257 is the DEAH box element. Phosphothreonine is present on threonine 875.

This sequence belongs to the helicase family. RAD3/XPD subfamily.

It localises to the nucleus. It carries out the reaction ATP + H2O = ADP + phosphate + H(+). Functionally, a probable ATP-dependent DNA helicase implicated in DNA repair and the maintenance of genomic stability. Acts as an anti-recombinase to counteract toxic recombination and limit crossover during meiosis. Regulates meiotic recombination and crossover homeostasis by physically dissociating strand invasion events and thereby promotes noncrossover repair by meiotic synthesis dependent strand annealing (SDSA) as well as disassembly of D loop recombination intermediates. In Drosophila grimshawi (Hawaiian fruit fly), this protein is Regulator of telomere elongation helicase 1 homolog.